The chain runs to 223 residues: Glutathione S-transferase U6 (223 aa).

In terms of domain architecture, GST N-terminal spans E5–P84. Glutathione-binding positions include S15–P16, N41–K42, K55–I56, and E68–S69. The GST C-terminal domain maps to D89–M216. T150 is modified (phosphothreonine).

The protein belongs to the GST superfamily. Tau family.

It is found in the cytoplasm. It localises to the cytosol. It catalyses the reaction RX + glutathione = an S-substituted glutathione + a halide anion + H(+). Its function is as follows. May be involved in the conjugation of reduced glutathione to a wide number of exogenous and endogenous hydrophobic electrophiles and have a detoxification role against certain herbicides. This Arabidopsis thaliana (Mouse-ear cress) protein is Glutathione S-transferase U6 (GSTU6).